The following is a 303-amino-acid chain: sn-1-specific diacylglycerol lipase ABHD11 (303 aa).

The transit peptide at 1–22 (MLRWTRAWTAPYRGIGLSNSSF) directs the protein to the mitochondrion. In terms of domain architecture, AB hydrolase-1 spans 55-290 (PALVFLHGLF…NAGHWVHSDR (236 aa)). The residue at position 75 (K75) is an N6-succinyllysine. Active-site charge relay system residues include S129, D225, and H284.

This sequence belongs to the AB hydrolase superfamily. As to quaternary structure, interacts with OGDH and DLST; this interaction maintains the functional lipoylation of the 2-oxoglutarate dehydrogenase complex. In terms of processing, phosphorylated.

It localises to the mitochondrion. It is found in the mitochondrion matrix. It catalyses the reaction a 1,3-diacyl-sn-glycerol + H2O = a 1-acyl-sn-glycerol + a fatty acid + H(+). The catalysed reaction is 1-octadecanoyl-2-(9Z-octadecenoyl)-sn-glycerol + H2O = 2-(9Z-octadecenoyl)-glycerol + octadecanoate + H(+). The enzyme catalyses 1-octadecanoyl-2-(4Z,7Z,10Z,13Z,16Z,19Z-docosahexaenoyl)-sn-glycerol + H2O = 2-(4Z,7Z,10Z,13Z,16Z,19Z-docosahexaenoyl)-glycerol + octadecanoate + H(+). It carries out the reaction a 1,2-diacyl-sn-glycerol + H2O = a 2-acylglycerol + a fatty acid + H(+). It catalyses the reaction 1,2-didecanoylglycerol + H2O = decanoylglycerol + decanoate + H(+). The catalysed reaction is 1-octadecanoyl-2-(5Z,8Z,11Z,14Z-eicosatetraenoyl)-sn-glycerol + H2O = 2-(5Z,8Z,11Z,14Z-eicosatetraenoyl)-glycerol + octadecanoate + H(+). The diacylglycerol lipase activity can be modulated by phosphorylation by cAMP-dependent protein kinase. Functionally, catalyzes the hydrolysis of diacylglycerol in vitro and may function as a key regulator in lipid metabolism, namely by regulating the intracellular levels of diacylglycerol. 1,2-diacyl-sn-glycerols are the preferred substrate over 1,3-diacyl-sn-glycerols. The enzyme hydrolyzes stearate in preference to palmitate from the sn-1 position of 1,2-diacyl-sn-glycerols. Maintains the functional lipoylation of the 2-oxoglutarate dehydrogenase complex (OGDHc) through its interaction with the OGDHc by preventing the formation of lipoyl adducts. In addition, is also required for the expansion and differentiation of embryonic stem cells (ESCs). This is sn-1-specific diacylglycerol lipase ABHD11 from Bos taurus (Bovine).